The primary structure comprises 281 residues: 2-dehydro-3-deoxyphosphooctonate aldolase (281 aa).

It belongs to the KdsA family.

Its subcellular location is the cytoplasm. It carries out the reaction D-arabinose 5-phosphate + phosphoenolpyruvate + H2O = 3-deoxy-alpha-D-manno-2-octulosonate-8-phosphate + phosphate. It participates in carbohydrate biosynthesis; 3-deoxy-D-manno-octulosonate biosynthesis; 3-deoxy-D-manno-octulosonate from D-ribulose 5-phosphate: step 2/3. The protein operates within bacterial outer membrane biogenesis; lipopolysaccharide biosynthesis. This chain is 2-dehydro-3-deoxyphosphooctonate aldolase, found in Ectopseudomonas mendocina (strain ymp) (Pseudomonas mendocina).